We begin with the raw amino-acid sequence, 261 residues long: Mannose-specific lectin 2 (261 aa).

A signal peptide spans 1-23 (MAKLLLFLLPAILGLLIPRSAVA). 2 Bulb-type lectin domains span residues 26–131 (TNYL…PWVP) and 145–252 (DNLL…SKRS). Residues 51-55 (QNDCN), Tyr59, Trp63, Gln64, 170-174 (QGDCN), Tyr178, and 182-185 (YGWQ) contribute to the beta-D-mannose site. Positions 51 to 59 (QNDCNLVLY) match the Carbohydrate-binding motif 1 motif. 2 disulfides stabilise this stretch: Cys54–Cys74 and Cys173–Cys195. A Carbohydrate-binding motif 2 motif is present at residues 170–178 (QGDCNLVLY).

As to quaternary structure, forms heterotetramer of 2 chains 1 and 2 chains 2 arranged as a dimer of chain 1 and chain 2 heterodimers.

In terms of biological role, mannose-specific lectin. Shows agglutinating activity towards erythrocytes from rabbit. This Colocasia esculenta (Wild taro) protein is Mannose-specific lectin 2.